A 584-amino-acid polypeptide reads, in one-letter code: UvrABC system protein C (584 aa).

Residues 14-91 (HKPGCYLWKD…IKTHLPKYNI (78 aa)) form the GIY-YIG domain. The UVR domain maps to 192–227 (DHILMILQTKEQHAVTKLDFENAQKYAEQQKALTSI).

This sequence belongs to the UvrC family. In terms of assembly, interacts with UvrB in an incision complex.

It localises to the cytoplasm. Functionally, the UvrABC repair system catalyzes the recognition and processing of DNA lesions. UvrC both incises the 5' and 3' sides of the lesion. The N-terminal half is responsible for the 3' incision and the C-terminal half is responsible for the 5' incision. In Ureaplasma parvum serovar 3 (strain ATCC 27815 / 27 / NCTC 11736), this protein is UvrABC system protein C.